The chain runs to 727 residues: Pollen-specific leucine-rich repeat extensin-like protein 3 (727 aa).

The first 22 residues, 1–22, serve as a signal peptide directing secretion; the sequence is MPHIYKQPLGIFQGFVPTLTDA. Residues 19 to 43 form an LRR 1 repeat; sequence LTDAEVSFIAQRQLLTLPENGELPD. Asn80 is a glycosylation site (N-linked (GlcNAc...) asparagine). LRR repeat units lie at residues 107–131, 132–154, 156–179, 180–202, 203–226, 228–249, 250–273, 275–296, and 297–321; these read VAVVAGVDLNGADIAGHLPAELGLM, TDVAMFHLNSNRFCGIIPKSFEK, SLMHEFDVSNNRFVGPFPSVVLSW, PAVKFIDVRYNDFEGQVPPELFK, KDLDAIFLNNNRFTSTIPDSLGES, ASVVTFAHNKFSGCIPRSIGNM, KNLNEIIFKDNSLGGCFPSEIGKL, NVNVFDASMNSFTGVLPPSFVG, and LTSMEEFDISGNKLTGFIPENICKL. Asn326 carries N-linked (GlcNAc...) asparagine glycosylation. The interval 381-727 is disordered; the sequence is SKDKCAGGSS…SPPPPMFQGY (347 aa). Composition is skewed to pro residues over residues 397–419, 446–457, 466–479, 492–677, and 718–727; these read SPSPVPTRPVHKPQPPKESPQPN, SPPPASSPPTSP, VHKPQPPKESPQPN, SPPP…PKMS, and SPPPPMFQGY. Residues 432–727 are contains the Ser-Pro(4) repeats; that stretch reads SPPPPQQPHH…SPPPPMFQGY (296 aa).

Hydroxylated on proline residues in the S-P-P-P-P repeat. In terms of processing, O-glycosylated on hydroxyprolines. In terms of tissue distribution, expressed in flowers, stamen, pollen, and pollinated carpels.

The protein localises to the secreted. It is found in the cell wall. Modulates cell morphogenesis by regulating cell wall formation and assembly, and/or growth polarization. This is Pollen-specific leucine-rich repeat extensin-like protein 3 (PEX3) from Arabidopsis thaliana (Mouse-ear cress).